A 136-amino-acid polypeptide reads, in one-letter code: MGSKGLKGVMVCLLILGLVLEQVQVEGKSCCRTTLGRNCYNLCRSRGAQKLCSTVCRCKLTSGLSCPKGFPKLALESNSDEPDTIEYCNLGCRSSVCDYMVNAAADDEEMKLYVENCGDACVNFCNGDAGLTSLDA.

The signal sequence occupies residues 1 to 27 (MGSKGLKGVMVCLLILGLVLEQVQVEG). Cystine bridges form between cysteine 30/cysteine 66, cysteine 31/cysteine 58, cysteine 39/cysteine 56, and cysteine 43/cysteine 52. The propeptide at 73–136 (LALESNSDEP…GDAGLTSLDA (64 aa)) is acidic domain.

This sequence belongs to the plant thionin (TC 1.C.44) family. 4 C-C subfamily.

Its subcellular location is the secreted. Functionally, thionins are small plant proteins which are toxic to animal cells. They seem to exert their toxic effect at the level of the cell membrane. Their precise function is not known. This Triticum aestivum (Wheat) protein is Alpha-2-purothionin (THI1.2).